A 470-amino-acid chain; its full sequence is Cholesterol 7-desaturase nvd 1 (470 aa).

A helical transmembrane segment spans residues 67 to 87 (LALCIAGFSVLMYFLYVLVFV). The Rieske domain maps to 136–238 (FRLVDSQQLE…CREVNKAIFV (103 aa)). [2Fe-2S] cluster-binding residues include C176, H178, C196, and H199.

It belongs to the cholesterol 7-desaturase family. [2Fe-2S] cluster serves as cofactor.

The protein resides in the membrane. It catalyses the reaction cholesterol + NADPH + O2 + H(+) = 7-dehydrocholesterol + NADP(+) + 2 H2O. The catalysed reaction is cholesterol + NADH + O2 + H(+) = 7-dehydrocholesterol + NAD(+) + 2 H2O. The protein operates within steroid hormone biosynthesis; dafachronic acid biosynthesis. In terms of biological role, catalyzes the production of 7-dehydrocholesterol (7-DHC or cholesta-5,7-dien-3beta-ol) by inserting a double bond (desaturating) at the C7-C8 single bond of cholesterol. Essential regulator of steroid biosynthesis as this reaction is the first step in the synthesis of the steroid hormone Delta(7)-dafachronic acid. The protein is Cholesterol 7-desaturase nvd 1 of Ciona intestinalis (Transparent sea squirt).